We begin with the raw amino-acid sequence, 409 residues long: Rho-GTPase-activating protein BAG7 (409 aa).

Residues 1-26 show a composition bias toward polar residues; the sequence is MFNMNLLSTPSSEEGSPQNRSSSMSS. The segment at 1-32 is disordered; sequence MFNMNLLSTPSSEEGSPQNRSSSMSSVEGKKD. Residues 50–257 enclose the Rho-GAP domain; it reads VSLEESLKVA…FLILHASDII (208 aa). A disordered region spans residues 362–409; that stretch reads KLLGNVGNSSNTGIKDPTERVPRGEHKTKHKQRQSWLRRLTSPSRTQP. The segment covering 377–386 has biased composition (basic and acidic residues); the sequence is DPTERVPRGE.

As to quaternary structure, interacts with RHO1.

Functionally, acts in signal transduction. Activates RHO1. The chain is Rho-GTPase-activating protein BAG7 (BAG7) from Saccharomyces cerevisiae (strain ATCC 204508 / S288c) (Baker's yeast).